The chain runs to 114 residues: Large ribosomal subunit protein bL19 (114 aa).

Belongs to the bacterial ribosomal protein bL19 family.

This protein is located at the 30S-50S ribosomal subunit interface and may play a role in the structure and function of the aminoacyl-tRNA binding site. In Thermobifida fusca (strain YX), this protein is Large ribosomal subunit protein bL19.